The primary structure comprises 461 residues: Chromosomal replication initiator protein DnaA (461 aa).

The segment at 1-68 (MINAWAQIEH…EKAAASVLGS (68 aa)) is domain I, interacts with DnaA modulators. The interval 68–118 (SVPTITVVSGEEPAAAPRPVQVPAQKRPAAARTSGAEQMGLPLHYASRSAD) is domain II. The interval 119–336 (SIKWMHSFDE…SCLRNLLLKA (218 aa)) is domain III, AAA+ region. 4 residues coordinate ATP: Gly-162, Gly-164, Lys-165, and Thr-166. A domain IV, binds dsDNA region spans residues 337 to 461 (RLLNQQITMD…VERNGRIIHP (125 aa)).

Belongs to the DnaA family. In terms of assembly, oligomerizes as a right-handed, spiral filament on DNA at oriC.

The protein localises to the cytoplasm. In terms of biological role, plays an essential role in the initiation and regulation of chromosomal replication. ATP-DnaA binds to the origin of replication (oriC) to initiate formation of the DNA replication initiation complex once per cell cycle. Binds the DnaA box (a 9 base pair repeat at the origin) and separates the double-stranded (ds)DNA. Forms a right-handed helical filament on oriC DNA; dsDNA binds to the exterior of the filament while single-stranded (ss)DNA is stabiized in the filament's interior. The ATP-DnaA-oriC complex binds and stabilizes one strand of the AT-rich DNA unwinding element (DUE), permitting loading of DNA polymerase. After initiation quickly degrades to an ADP-DnaA complex that is not apt for DNA replication. Binds acidic phospholipids. This Oleidesulfovibrio alaskensis (strain ATCC BAA-1058 / DSM 17464 / G20) (Desulfovibrio alaskensis) protein is Chromosomal replication initiator protein DnaA.